Consider the following 328-residue polypeptide: Ferredoxin--NADP reductase 2 (328 aa).

Glutamate 37, glutamine 45, tyrosine 50, valine 90, phenylalanine 124, aspartate 285, and threonine 325 together coordinate FAD.

It belongs to the ferredoxin--NADP reductase type 2 family. Homodimer. It depends on FAD as a cofactor.

The catalysed reaction is 2 reduced [2Fe-2S]-[ferredoxin] + NADP(+) + H(+) = 2 oxidized [2Fe-2S]-[ferredoxin] + NADPH. This Latilactobacillus sakei subsp. sakei (strain 23K) (Lactobacillus sakei subsp. sakei) protein is Ferredoxin--NADP reductase 2.